Reading from the N-terminus, the 234-residue chain is Probable chemoreceptor glutamine deamidase CheD 1 (234 aa).

This sequence belongs to the CheD family.

It carries out the reaction L-glutaminyl-[protein] + H2O = L-glutamyl-[protein] + NH4(+). Functionally, probably deamidates glutamine residues to glutamate on methyl-accepting chemotaxis receptors (MCPs), playing an important role in chemotaxis. This is Probable chemoreceptor glutamine deamidase CheD 1 from Albidiferax ferrireducens (strain ATCC BAA-621 / DSM 15236 / T118) (Rhodoferax ferrireducens).